A 252-amino-acid chain; its full sequence is Trans-aconitate 2-methyltransferase (252 aa).

Belongs to the methyltransferase superfamily. Tam family.

It is found in the cytoplasm. The enzyme catalyses trans-aconitate + S-adenosyl-L-methionine = (E)-3-(methoxycarbonyl)pent-2-enedioate + S-adenosyl-L-homocysteine. In terms of biological role, catalyzes the S-adenosylmethionine monomethyl esterification of trans-aconitate. The chain is Trans-aconitate 2-methyltransferase from Escherichia coli (strain ATCC 8739 / DSM 1576 / NBRC 3972 / NCIMB 8545 / WDCM 00012 / Crooks).